A 466-amino-acid polypeptide reads, in one-letter code: Zinc finger and SCAN domain-containing protein 26 (466 aa).

A Glycyl lysine isopeptide (Lys-Gly) (interchain with G-Cter in SUMO2) cross-link involves residue K21. Residues 42–124 form the SCAN box domain; the sequence is CKQFRQLRYE…GILEDLQLDR (83 aa). 2 stretches are compositionally biased toward basic and acidic residues: residues 124 to 135 and 163 to 173; these read RGKAGEQKDSAQ and KPEERGKETRS. The disordered stretch occupies residues 124 to 182; sequence RGKAGEQKDSAQRSRPTVLVGEPAPRREAREQPGCALPQKPEERGKETRSENGNLIAGT. The segment at 220–242 adopts a C2H2-type 1; degenerate zinc-finger fold; it reads SQCLETKERLVQNSGLIEHDRAH. 7 C2H2-type zinc fingers span residues 270-292, 298-320, 326-348, 354-376, 382-404, 410-432, and 438-460; these read HPCQ…QKIH, YQCK…LRIH, YLCI…QKIH, RECK…QRVH, HHCN…HRIH, FKCN…VRIH, and YKCS…QRHH.

The protein localises to the nucleus. Functionally, may be involved in transcriptional regulation. This is Zinc finger and SCAN domain-containing protein 26 (Zscan26) from Mus musculus (Mouse).